The sequence spans 392 residues: GDSL esterase/lipase ESM1 (392 aa).

Residues 1-28 (MADNLNLVSVLGVLLVLTIFHNPIIVYA) form the signal peptide. S43 acts as the Nucleophile in catalysis. N-linked (GlcNAc...) asparagine glycosylation is found at N146, N166, and N290. Active-site residues include D324 and H327.

Belongs to the 'GDSL' lipolytic enzyme family.

It is found in the secreted. Functionally, represses or inhibits nitriles production from methionine-derived and from indol-3-ylmethyl glucosinolates. Favors isothiocyanate production. This is GDSL esterase/lipase ESM1 (ESM1) from Arabidopsis thaliana (Mouse-ear cress).